Consider the following 133-residue polypeptide: Large-conductance mechanosensitive channel (133 aa).

The next 2 membrane-spanning stretches (helical) occupy residues 19–39 and 79–99; these read IDLA…TSLV and IQSV…VKLI.

Belongs to the MscL family. As to quaternary structure, homopentamer.

The protein localises to the cell membrane. Channel that opens in response to stretch forces in the membrane lipid bilayer. May participate in the regulation of osmotic pressure changes within the cell. The sequence is that of Large-conductance mechanosensitive channel from Clostridium tetani (strain Massachusetts / E88).